The primary structure comprises 240 residues: Adapter protein MecA (240 aa).

The segment at 118–138 (EQRAQQQKHSHKSEQKQTKQR) is disordered.

The protein belongs to the MecA family. In terms of assembly, homodimer.

In terms of biological role, enables the recognition and targeting of unfolded and aggregated proteins to the ClpC protease or to other proteins involved in proteolysis. The sequence is that of Adapter protein MecA from Staphylococcus haemolyticus (strain JCSC1435).